Consider the following 483-residue polypeptide: Aspartyl/glutamyl-tRNA(Asn/Gln) amidotransferase subunit B (483 aa).

This sequence belongs to the GatB/GatE family. GatB subfamily. As to quaternary structure, heterotrimer of A, B and C subunits.

The enzyme catalyses L-glutamyl-tRNA(Gln) + L-glutamine + ATP + H2O = L-glutaminyl-tRNA(Gln) + L-glutamate + ADP + phosphate + H(+). It carries out the reaction L-aspartyl-tRNA(Asn) + L-glutamine + ATP + H2O = L-asparaginyl-tRNA(Asn) + L-glutamate + ADP + phosphate + 2 H(+). Its function is as follows. Allows the formation of correctly charged Asn-tRNA(Asn) or Gln-tRNA(Gln) through the transamidation of misacylated Asp-tRNA(Asn) or Glu-tRNA(Gln) in organisms which lack either or both of asparaginyl-tRNA or glutaminyl-tRNA synthetases. The reaction takes place in the presence of glutamine and ATP through an activated phospho-Asp-tRNA(Asn) or phospho-Glu-tRNA(Gln). The protein is Aspartyl/glutamyl-tRNA(Asn/Gln) amidotransferase subunit B of Anaeromyxobacter sp. (strain Fw109-5).